Reading from the N-terminus, the 387-residue chain is 1-deoxy-D-xylulose 5-phosphate reductoisomerase (387 aa).

NADPH contacts are provided by Thr-10, Gly-11, Ile-13, Asn-38, and Asn-122. Lys-123 lines the 1-deoxy-D-xylulose 5-phosphate pocket. Glu-124 is a binding site for NADPH. Asp-148 contacts Mn(2+). The 1-deoxy-D-xylulose 5-phosphate site is built by Ser-149, Glu-150, Ser-174, and His-197. Glu-150 provides a ligand contact to Mn(2+). An NADPH-binding site is contributed by Gly-203. Positions 210, 215, 216, and 219 each coordinate 1-deoxy-D-xylulose 5-phosphate. Residue Glu-219 coordinates Mn(2+).

This sequence belongs to the DXR family. Requires Mg(2+) as cofactor. It depends on Mn(2+) as a cofactor.

The catalysed reaction is 2-C-methyl-D-erythritol 4-phosphate + NADP(+) = 1-deoxy-D-xylulose 5-phosphate + NADPH + H(+). Its pathway is isoprenoid biosynthesis; isopentenyl diphosphate biosynthesis via DXP pathway; isopentenyl diphosphate from 1-deoxy-D-xylulose 5-phosphate: step 1/6. Its function is as follows. Catalyzes the NADPH-dependent rearrangement and reduction of 1-deoxy-D-xylulose-5-phosphate (DXP) to 2-C-methyl-D-erythritol 4-phosphate (MEP). This chain is 1-deoxy-D-xylulose 5-phosphate reductoisomerase, found in Ehrlichia ruminantium (strain Welgevonden).